A 62-amino-acid polypeptide reads, in one-letter code: DNA-directed RNA polymerase subunit Rpo10 (62 aa).

Positions 6, 9, 43, and 44 each coordinate Zn(2+).

This sequence belongs to the archaeal Rpo10/eukaryotic RPB10 RNA polymerase subunit family. Part of the RNA polymerase complex. Zn(2+) is required as a cofactor.

The protein resides in the cytoplasm. It catalyses the reaction RNA(n) + a ribonucleoside 5'-triphosphate = RNA(n+1) + diphosphate. In terms of biological role, DNA-dependent RNA polymerase (RNAP) catalyzes the transcription of DNA into RNA using the four ribonucleoside triphosphates as substrates. The polypeptide is DNA-directed RNA polymerase subunit Rpo10 (Methanosarcina acetivorans (strain ATCC 35395 / DSM 2834 / JCM 12185 / C2A)).